The sequence spans 96 residues: UPF0235 protein VV1_1522 (96 aa).

This sequence belongs to the UPF0235 family.

The sequence is that of UPF0235 protein VV1_1522 from Vibrio vulnificus (strain CMCP6).